Here is a 155-residue protein sequence, read N- to C-terminus: uncharacterized protein (155 aa).

5 helical membrane passes run 4-24, 46-66, 77-97, 101-121, and 130-150; these read IVGA…AGYL, AIGI…AIVY, FWFT…FQFT, LLAA…LLII, and SYLL…SFTI.

The protein belongs to the TspO/BZRP family.

Its subcellular location is the cell membrane. This is an uncharacterized protein from Bacillus subtilis (strain 168).